Here is a 351-residue protein sequence, read N- to C-terminus: Probable sugar phosphate/phosphate translocator At5g11230 (351 aa).

Transmembrane regions (helical) follow at residues 15-35, 49-69, 89-109, 113-133, 141-161, 165-185, 205-225, 236-256, 263-283, and 286-306; these read IVLS…VIVY, FPIS…FLII, VVPI…AYIY, SFIQ…GVLF, DTMM…YGEA, VWGV…LVLI, VAPC…FPVL, AIFG…FLLV, TMNV…WSVI, and TVTP…AYYN. Positions 38-156 constitute an EamA domain; that stretch reads YILDKKMYNW…LSISFGVAIA (119 aa). The interval 321-351 is disordered; that stretch reads KKIQQADEESGRLLEEREGDVEGKKNDQSGN.

This sequence belongs to the TPT transporter family. TPT (TC 2.A.7.9) subfamily.

Its subcellular location is the membrane. The sequence is that of Probable sugar phosphate/phosphate translocator At5g11230 from Arabidopsis thaliana (Mouse-ear cress).